Consider the following 266-residue polypeptide: MPKGKKAKGKKVAPAPAVVKKQEAKKVVNPLFEKRPKNFGIGQDIQPKRDLTRFVKWPRYIRLQRQRAILYKRLKVPPAINQFTQALDRQTATQLLKLAHKYRPETKQEKKQRLLARAEKKAAGKGDVPTKRPPVLRAGVNTVTTLVENKKAQLVVIAHDVDPIELVVFLPALCRKMGVPYCIIKGKARLGRLVHRKTCTTVAFTQVNSEDKSALAKLVEAIRTNYNDRYDEIRRHWGGNVLGPKSVARIAKLEKAKAKELATKLG.

Glycyl lysine isopeptide (Lys-Gly) (interchain with G-Cter in SUMO2) cross-links involve residues Lys11, Lys20, and Lys21. Lys34 is modified (N6-acetyllysine). Lys48 participates in a covalent cross-link: Glycyl lysine isopeptide (Lys-Gly) (interchain with G-Cter in SUMO2). The residue at position 97 (Lys97) is an N6-acetyllysine; alternate. Lys97 participates in a covalent cross-link: Glycyl lysine isopeptide (Lys-Gly) (interchain with G-Cter in SUMO2); alternate. Residue Lys125 forms a Glycyl lysine isopeptide (Lys-Gly) (interchain with G-Cter in SUMO2) linkage. Lys217 carries the post-translational modification N6-acetyllysine. Lys245 participates in a covalent cross-link: Glycyl lysine isopeptide (Lys-Gly) (interchain with G-Cter in SUMO2).

It belongs to the eukaryotic ribosomal protein eL8 family. In terms of assembly, component of the large ribosomal subunit. Interacts with CRY1. Interacts with DICER1, AGO2, TARBP2, MOV10 and EIF6; they form a large RNA-induced silencing complex (RISC).

It localises to the cytoplasm. In terms of biological role, component of the large ribosomal subunit. The ribosome is a large ribonucleoprotein complex responsible for the synthesis of proteins in the cell. The protein is Large ribosomal subunit protein eL8 (RPL7A) of Bos taurus (Bovine).